We begin with the raw amino-acid sequence, 106 residues long: UPF0060 membrane protein Smed_0659 (106 aa).

A run of 3 helical transmembrane segments spans residues 4–24 (FAIYFLAALAEIAGCFTFWAW), 31–51 (GLWLLPGMASLAIFAWLLTMV), and 61–81 (AAYGGIYIIASLCWLWVAEGA).

Belongs to the UPF0060 family.

It localises to the cell inner membrane. This is UPF0060 membrane protein Smed_0659 from Sinorhizobium medicae (strain WSM419) (Ensifer medicae).